The sequence spans 164 residues: Transcriptional repressor NrdR (164 aa).

A zinc finger spans residues 3 to 34 (CPFCRHDDTQVVDSRVSEDGAAIRRRRRCPAC). Residues 49-139 (PSVVKKDGSR…VYRRFEDVSE (91 aa)) enclose the ATP-cone domain.

This sequence belongs to the NrdR family. It depends on Zn(2+) as a cofactor.

Functionally, negatively regulates transcription of bacterial ribonucleotide reductase nrd genes and operons by binding to NrdR-boxes. In Paraburkholderia phymatum (strain DSM 17167 / CIP 108236 / LMG 21445 / STM815) (Burkholderia phymatum), this protein is Transcriptional repressor NrdR.